Consider the following 480-residue polypeptide: 2-phosphoxylose phosphatase 1 (480 aa).

The Cytoplasmic portion of the chain corresponds to 1-6; sequence MLYRNR. A helical; Signal-anchor for type II membrane protein transmembrane segment spans residues 7–27; that stretch reads FLVLLALAGLLAFLSLSLQFF. Over 28–480 the chain is Lumenal; it reads HLIPVSTTKN…YYDACHGEGA (453 aa). His-97 serves as the catalytic Nucleophile. N-linked (GlcNAc...) asparagine glycosylation is found at Asn-194, Asn-305, and Asn-354. The active-site Proton donor is Asp-379.

The protein belongs to the histidine acid phosphatase family. In terms of assembly, interacts with B3GAT3; the interaction increases the 2-phosphoxylose phosphatase activity of PXYLP1 during completion of linkage region formation in a B3GAT3-mediated manner.

It localises to the golgi apparatus membrane. The catalysed reaction is 3-O-[beta-D-GlcA-(1-&gt;3)-beta-D-Gal-(1-&gt;3)-beta-D-Gal-(1-&gt;4)-beta-D-2-O-P-Xyl]-L-seryl-[protein] + H2O = 3-O-(beta-D-GlcA-(1-&gt;3)-beta-D-Gal-(1-&gt;3)-beta-D-Gal-(1-&gt;4)-beta-D-Xyl)-L-seryl-[protein] + phosphate. Functionally, responsible for the 2-O-dephosphorylation of xylose in the glycosaminoglycan-protein linkage region of proteoglycans thereby regulating the amount of mature glycosaminoglycan (GAG) chains. Sulfated glycosaminoglycans (GAGs), including heparan sulfate and chondroitin sulfate, are synthesized on the so-called common GAG-protein linkage region (GlcUAbeta1-3Galbeta1-3Galbeta1-4Xylbeta1-O-Ser) of core proteins, which is formed by the stepwise addition of monosaccharide residues by the respective specific glycosyltransferases. Xylose 2-O-dephosphorylation during completion of linkage region formation is a prerequisite for the initiation and efficient elongation of the repeating disaccharide region of GAG chains. The protein is 2-phosphoxylose phosphatase 1 of Rattus norvegicus (Rat).